The sequence spans 375 residues: MTMAMQPQTLVIKIGTSSLARPETGQLALSTIAALVETVCKLIGQGHRVVLVSSGAIGVGCSRLGLTERPKKMALKQAIAAVGQGRLMRTYDDLFSSLRQPIAQILLTRRELIERTAYVNAYNTFQALFELGVIAIVNENDTVAIDELKFGDNDTLSALVASLVEADWLFLLTDVDRLYSSDPRLDPDAYPIPLVKAAELAQLQVRTDSTGSAWGTGGMATKITAARIATGSGVRTVITHGQKPEQILAILQGANLGTQFEAQPRSDNARKRWIAYGLVPTGKIFIDAGAVQALKARGKSLLAIGVVALEGEFSATDAVIICDPQGQELGRGLVNYNCNELEKIKGLHSEAIAAVLGYVGPDTVIHRDNLVLQEN.

Lys13 contributes to the ATP binding site. Substrate is bound by residues Ser54, Asp141, and Asn153. Residues 173–174 and 216–222 each bind ATP; these read TD and TGGMATK. Positions 281-359 constitute a PUA domain; that stretch reads TGKIFIDAGA…EAIAAVLGYV (79 aa).

It belongs to the glutamate 5-kinase family.

It localises to the cytoplasm. It carries out the reaction L-glutamate + ATP = L-glutamyl 5-phosphate + ADP. The protein operates within amino-acid biosynthesis; L-proline biosynthesis; L-glutamate 5-semialdehyde from L-glutamate: step 1/2. Its function is as follows. Catalyzes the transfer of a phosphate group to glutamate to form L-glutamate 5-phosphate. This Synechocystis sp. (strain ATCC 27184 / PCC 6803 / Kazusa) protein is Glutamate 5-kinase.